The chain runs to 198 residues: Putative pseudouridine methyltransferase (198 aa).

S-adenosyl-L-methionine contacts are provided by Met-132 and Cys-186.

It belongs to the methyltransferase superfamily. TrmY family.

It localises to the cytoplasm. The sequence is that of Putative pseudouridine methyltransferase from Photobacterium profundum (strain SS9).